A 356-amino-acid polypeptide reads, in one-letter code: Histidinol-phosphate aminotransferase (356 aa).

K217 bears the N6-(pyridoxal phosphate)lysine mark.

It belongs to the class-II pyridoxal-phosphate-dependent aminotransferase family. Histidinol-phosphate aminotransferase subfamily. Homodimer. Pyridoxal 5'-phosphate is required as a cofactor.

The enzyme catalyses L-histidinol phosphate + 2-oxoglutarate = 3-(imidazol-4-yl)-2-oxopropyl phosphate + L-glutamate. The protein operates within amino-acid biosynthesis; L-histidine biosynthesis; L-histidine from 5-phospho-alpha-D-ribose 1-diphosphate: step 7/9. In Chromobacterium violaceum (strain ATCC 12472 / DSM 30191 / JCM 1249 / CCUG 213 / NBRC 12614 / NCIMB 9131 / NCTC 9757 / MK), this protein is Histidinol-phosphate aminotransferase.